We begin with the raw amino-acid sequence, 1161 residues long: Hamartin (1161 aa).

Lysine 30 participates in a covalent cross-link: Glycyl lysine isopeptide (Lys-Gly) (interchain with G-Cter in ubiquitin). Disordered regions lie at residues 296–336 and 353–591; these read PYVD…PSTR and CGMT…QRGV. Residues 303-336 are compositionally biased toward low complexity; sequence SYGGSTSTPSSSSRLMLFSPPGQLPQSLSSPSTR. A compositionally biased stretch (pro residues) spans 393–402; that stretch reads TSPPPAPPCP. Residues 403 to 784 form a mediates interaction with WDR45B region; it reads QDDCVHGSAA…QIRQLQHDRE (382 aa). Residues 471–484 are compositionally biased toward basic and acidic residues; the sequence is EKDKEEAAISKELS. Phosphoserine occurs at positions 484, 502, 508, 518, 592, and 595. Positions 509 to 529 are enriched in polar residues; the sequence is LSGSQRKTHSAASGTQGSSVN. Coiled-coil stretches lie at residues 721–849, 879–917, and 967–991; these read IRAA…NRQL, TAYR…AKKD, and EKDG…ERLD. Disordered stretches follow at residues 1003–1077 and 1092–1161; these read GHNE…SLPS and NKSE…PEHS. Over residues 1004 to 1017 the composition is skewed to basic and acidic residues; it reads HNEEASGHNGETRT. The segment covering 1026–1043 has biased composition (low complexity); that stretch reads SCGGRVTGGSSSSSSELS. A compositionally biased stretch (polar residues) spans 1064–1077; that stretch reads PSSSIPTTVGSLPS. A Phosphoserine modification is found at serine 1094. Low complexity predominate over residues 1103–1113; the sequence is VTMSSSSLSET. 2 stretches are compositionally biased toward basic and acidic residues: residues 1114–1124 and 1152–1161; these read LKTELGKDSGT and DYNETHPEHS.

In terms of assembly, component of the TSC-TBC complex (also named Rhebulator complex), composed of 2 molecules of TSC1, 2 molecules of TSC2 and 1 molecule of TBC1D7. Probably forms a complex composed of chaperones HSP90 and HSP70, co-chaperones STIP1/HOP, CDC37, PPP5C, PTGES3/p23, TSC1 and client protein TSC2. Forms a complex composed of chaperones HSP90 and HSP70, co-chaperones CDC37, PPP5C, TSC1 and client protein TSC2, CDK4, AKT, RAF1 and NR3C1; this complex does not contain co-chaperones STIP1/HOP and PTGES3/p23. Forms a complex containing HSP90AA1, TSC1 and TSC2; TSC1 is required to recruit TCS2 to the complex. Interacts (via C-terminus) with the closed form of HSP90AA1 (via the middle domain and TPR repeat-binding motif). Interacts with DOCK7. Interacts with FBXW5. Interacts with WDR45B. Interacts with RPAP3 and URI1. Phosphorylation at Ser-502 does not affect interaction with TSC2. In terms of processing, 'Lys-63'-linked ubiquitinated at Lys-30 by PELI1; the ubiquitination promotes TSC1/TSC2 complex stability.

The protein resides in the lysosome membrane. Its subcellular location is the cytoplasm. It is found in the cytosol. Non-catalytic component of the TSC-TBC complex, a multiprotein complex that acts as a negative regulator of the canonical mTORC1 complex, an evolutionarily conserved central nutrient sensor that stimulates anabolic reactions and macromolecule biosynthesis to promote cellular biomass generation and growth. The TSC-TBC complex acts as a GTPase-activating protein (GAP) for the small GTPase RHEB, a direct activator of the protein kinase activity of mTORC1. In absence of nutrients, the TSC-TBC complex inhibits mTORC1, thereby preventing phosphorylation of ribosomal protein S6 kinase (RPS6KB1 and RPS6KB2) and EIF4EBP1 (4E-BP1) by the mTORC1 signaling. The TSC-TBC complex is inactivated in response to nutrients, relieving inhibition of mTORC1. Within the TSC-TBC complex, TSC1 stabilizes TSC2 and prevents TSC2 self-aggregation. Involved in microtubule-mediated protein transport via its ability to regulate mTORC1 signaling. Also acts as a co-chaperone for HSP90AA1 facilitating HSP90AA1 chaperoning of protein clients such as kinases, TSC2 and glucocorticoid receptor NR3C1. Increases ATP binding to HSP90AA1 and inhibits HSP90AA1 ATPase activity. Competes with the activating co-chaperone AHSA1 for binding to HSP90AA1, thereby providing a reciprocal regulatory mechanism for chaperoning of client proteins. Recruits TSC2 to HSP90AA1 and stabilizes TSC2 by preventing the interaction between TSC2 and ubiquitin ligase HERC1. The chain is Hamartin from Mus musculus (Mouse).